Consider the following 88-residue polypeptide: Small ribosomal subunit protein uS15 (88 aa).

Belongs to the universal ribosomal protein uS15 family. In terms of assembly, part of the 30S ribosomal subunit. Forms a bridge to the 50S subunit in the 70S ribosome, contacting the 23S rRNA.

One of the primary rRNA binding proteins, it binds directly to 16S rRNA where it helps nucleate assembly of the platform of the 30S subunit by binding and bridging several RNA helices of the 16S rRNA. In terms of biological role, forms an intersubunit bridge (bridge B4) with the 23S rRNA of the 50S subunit in the ribosome. The protein is Small ribosomal subunit protein uS15 of Mycoplasma mobile (strain ATCC 43663 / 163K / NCTC 11711) (Mesomycoplasma mobile).